Consider the following 183-residue polypeptide: Non-specific lipid transfer protein GPI-anchored 15 (183 aa).

The N-terminal stretch at 1–24 (MGYRRSYAITFVALVAALWSVTKA) is a signal peptide. Disulfide bonds link Cys30–Cys71, Cys40–Cys55, Cys56–Cys97, and Cys69–Cys107. Asn47 and Asn86 each carry an N-linked (GlcNAc...) asparagine glycan. Residues 108-158 (NAATGPTAQPPAPSPTEKTPDVTLTPTSLPGARSGVGGGSKTVPSVGTGSS) form a disordered region. Residues 149 to 158 (TVPSVGTGSS) show a composition bias toward polar residues. Residue Ser158 is the site of GPI-anchor amidated serine attachment. The propeptide at 159–183 (SRNVDPLPLHFLMFAVLVVCTSSFL) is removed in mature form.

This sequence belongs to the plant LTP family. Expressed in seedlings, preferentially in the endodermis of hypocotyls and roots. Also observed in siliques.

The protein localises to the cell membrane. Functionally, probable lipid transfer protein. The polypeptide is Non-specific lipid transfer protein GPI-anchored 15 (Arabidopsis thaliana (Mouse-ear cress)).